An 81-amino-acid polypeptide reads, in one-letter code: Acyl carrier protein (81 aa).

A Carrier domain is found at 3–78 (QEIFDKIKNI…EAVNIIAEKT (76 aa)). Residue Ser-38 is modified to O-(pantetheine 4'-phosphoryl)serine.

It belongs to the acyl carrier protein (ACP) family. 4'-phosphopantetheine is transferred from CoA to a specific serine of apo-ACP by AcpS. This modification is essential for activity because fatty acids are bound in thioester linkage to the sulfhydryl of the prosthetic group.

The protein resides in the cytoplasm. It functions in the pathway lipid metabolism; fatty acid biosynthesis. In terms of biological role, carrier of the growing fatty acid chain in fatty acid biosynthesis. The polypeptide is Acyl carrier protein (Picosynechococcus sp. (strain ATCC 27264 / PCC 7002 / PR-6) (Agmenellum quadruplicatum)).